The sequence spans 522 residues: DNA-binding protein Ikaros (522 aa).

Disordered stretches follow at residues methionine 1–arginine 48 and alanine 96–alanine 115. 4 consecutive C2H2-type zinc fingers follow at residues leucine 125 to histidine 147, phenylalanine 153 to histidine 175, phenylalanine 181 to histidine 203, and histidine 209 to histidine 232. The disordered stretch occupies residues lysine 379 to lysine 406. C2H2-type zinc fingers lie at residues tyrosine 468 to histidine 490 and phenylalanine 496 to histidine 520.

Belongs to the Ikaros C2H2-type zinc-finger protein family. As to expression, expression mainly limited to thymus, spleen and pronephros. Very low expression in liver. No expression in testis, brain, eye and muscle.

It is found in the nucleus. Functionally, binds and activates the enhancer (delta-A element) of the CD3-delta gene. Functions in the specification and the maturation of the T-lymphocyte. Also interacts with a critical control element in the TDT (terminal deoxynucleotidyltransferase) promoter as well as with the promoters for other genes expressed during early stages of B- and T-cell development. Function is isoform-specific and is modulated by dominant-negative inactive isoforms. In Oncorhynchus mykiss (Rainbow trout), this protein is DNA-binding protein Ikaros (ikzf1).